The chain runs to 609 residues: Forkhead box protein O (609 aa).

Disordered regions lie at residues 1–89 and 181–263; these read MDGF…KNSS and KSVR…SSCG. T43 is modified (phosphothreonine; by PKB/AKT1). Over residues 62-79 the composition is skewed to polar residues; that stretch reads TKASNQQLASGDPQQAMQ. A compositionally biased stretch (low complexity) spans 80-89; the sequence is NANAAKKNSS. Positions 94–200 form a DNA-binding region, fork-head; it reads WGNLSYADLI…ETSRYEKRRG (107 aa). S189 carries the phosphoserine; by PKB/AKT1 modification. Polar residues-rich tracts occupy residues 220–229 and 254–263; these read ATPSPSSSVS and RASSNASSCG. S257 carries the post-translational modification Phosphoserine; by PKB/AKT1. S260, S261, and S266 each carry phosphoserine. 2 disordered regions span residues 321–365 and 384–411; these read AASG…QGQG and RDGL…DSLN. A compositionally biased stretch (pro residues) spans 327–339; sequence TQPPPPYQPPQQP. A compositionally biased stretch (polar residues) spans 388–397; sequence SPNSVTTTMS.

As to quaternary structure, interacts with melt.

The protein resides in the cytoplasm. Its subcellular location is the nucleus. In terms of biological role, transcription factor involved in the regulation of the insulin signaling pathway. Consistently activates both the downstream target Thor\d4EBP and the feedback control target InR. Involved in negative regulation of the cell cycle, modulating cell growth and proliferation. In response to cellular stresses, such as nutrient deprivation or increased levels of reactive oxygen species, foxo is activated and inhibits growth through the action of target genes such as Thor. Foxo activated in the adult fat body can regulate lifespan in adults; an insulin peptide itself may function as one secondary messenger of insulin-regulated aging. Also regulates Lip4, homolog of human acid lipases, thereby acting as a key modulator of lipid metabolism by insulin signaling and integrates insulin responses to glucose and lipid homeostasis. The polypeptide is Forkhead box protein O (Drosophila virilis (Fruit fly)).